A 215-amino-acid chain; its full sequence is MGKVYDWFEERLEIQSIADDITSKYVPPHVNIFYCLGGITLTCFIIQVATGFAMTFYYRPTVTEAFASVQYIMTDVNFGWLIRSVHRWSASMMVLMMILHVFRVYLTGGFKKPRELTWVTGVILGVLTVSFGVTGYSLPWDQIGYWAVKIVTGVPDAIPVVGSPIVELLRGSVSVGQTTLTRFYSLHTFVLPLLTAVFMLMHFLMIRKQGISGPL.

The chain crosses the membrane as a helical span at residues 32 to 52; that stretch reads IFYCLGGITLTCFIIQVATGF. Cysteine 35 contacts heme c. The heme b site is built by histidine 86 and histidine 100. Helical transmembrane passes span 90–110, 116–136, and 186–206; these read ASMM…TGGF, LTWV…VTGY, and LHTF…FLMI. Residues histidine 187 and histidine 202 each contribute to the heme b site.

The protein belongs to the cytochrome b family. PetB subfamily. In terms of assembly, the 4 large subunits of the cytochrome b6-f complex are cytochrome b6, subunit IV (17 kDa polypeptide, PetD), cytochrome f and the Rieske protein, while the 4 small subunits are PetG, PetL, PetM and PetN. The complex functions as a dimer. It depends on heme b as a cofactor. Heme c serves as cofactor.

It is found in the plastid. It localises to the chloroplast thylakoid membrane. Functionally, component of the cytochrome b6-f complex, which mediates electron transfer between photosystem II (PSII) and photosystem I (PSI), cyclic electron flow around PSI, and state transitions. The sequence is that of Cytochrome b6 from Zygnema circumcarinatum (Green alga).